Consider the following 263-residue polypeptide: Hydroxyethylthiazole kinase (263 aa).

Substrate is bound at residue methionine 41. Arginine 117 and threonine 163 together coordinate ATP. Residue glycine 190 participates in substrate binding.

The protein belongs to the Thz kinase family. Mg(2+) is required as a cofactor.

The enzyme catalyses 5-(2-hydroxyethyl)-4-methylthiazole + ATP = 4-methyl-5-(2-phosphooxyethyl)-thiazole + ADP + H(+). It functions in the pathway cofactor biosynthesis; thiamine diphosphate biosynthesis; 4-methyl-5-(2-phosphoethyl)-thiazole from 5-(2-hydroxyethyl)-4-methylthiazole: step 1/1. Its function is as follows. Catalyzes the phosphorylation of the hydroxyl group of 4-methyl-5-beta-hydroxyethylthiazole (THZ). The sequence is that of Hydroxyethylthiazole kinase from Exiguobacterium sp. (strain ATCC BAA-1283 / AT1b).